Consider the following 626-residue polypeptide: DNA mismatch repair protein MutL (626 aa).

Positions Glu377–Gly413 are disordered. Over residues Lys383–Thr393 the composition is skewed to polar residues.

This sequence belongs to the DNA mismatch repair MutL/HexB family.

In terms of biological role, this protein is involved in the repair of mismatches in DNA. It is required for dam-dependent methyl-directed DNA mismatch repair. May act as a 'molecular matchmaker', a protein that promotes the formation of a stable complex between two or more DNA-binding proteins in an ATP-dependent manner without itself being part of a final effector complex. The polypeptide is DNA mismatch repair protein MutL (Bacillus anthracis (strain A0248)).